Consider the following 250-residue polypeptide: Beta-crystallin B1 (250 aa).

Positions 1–47 (MSQVAKAAATTAVNPGPDGKGKGTPSTGTAPAPGPTPVPASVPRPAA) are disordered. Position 2 is an N-acetylserine (Ser2). An N-terminal arm region spans residues 2-56 (SQVAKAAATTAVNPGPDGKGKGTPSTGTAPAPGPTPVPASVPRPAAKVGELPPGS). Over residues 32-42 (APGPTPVPASV) the composition is skewed to pro residues. Beta/gamma crystallin 'Greek key' domains lie at 57 to 96 (YRLV…IVLS) and 97 to 141 (GPWV…RPIR). A connecting peptide region spans residues 142 to 146 (MDSQE). Beta/gamma crystallin 'Greek key' domains lie at 147-188 (HKIC…TVSS) and 189-231 (GTWV…RRLR). The interval 233–250 (RQWHQEGCFPVLTAEPPK) is C-terminal arm.

The protein belongs to the beta/gamma-crystallin family. In terms of assembly, homo/heterodimer, or complexes of higher-order. The structure of beta-crystallin oligomers seems to be stabilized through interactions between the N-terminal arms. In terms of processing, specific cleavages in the N-terminal arm occur during lens maturation and give rise to truncated forms, leading to impaired oligomerization and protein insolubilization. The protease responsible for this partial degradation could be calpain II.

Functionally, crystallins are the dominant structural components of the vertebrate eye lens. This chain is Beta-crystallin B1 (Crybb1), found in Rattus norvegicus (Rat).